Here is a 247-residue protein sequence, read N- to C-terminus: Probable transcriptional regulatory protein DvMF_3201 (247 aa).

Positions M1–R21 are disordered.

It belongs to the TACO1 family.

The protein localises to the cytoplasm. This is Probable transcriptional regulatory protein DvMF_3201 from Nitratidesulfovibrio vulgaris (strain DSM 19637 / Miyazaki F) (Desulfovibrio vulgaris).